The primary structure comprises 164 residues: Phosphopantetheine adenylyltransferase (164 aa).

Ser11 is a substrate binding site. Residues 11-12 and His19 each bind ATP; that span reads SF. Substrate is bound by residues Lys43, Ala76, and Arg90. ATP is bound by residues 91–93, Glu101, and 126–132; these read GLR and YQHISSS.

Belongs to the bacterial CoaD family. In terms of assembly, homohexamer. Requires Mg(2+) as cofactor.

It localises to the cytoplasm. It catalyses the reaction (R)-4'-phosphopantetheine + ATP + H(+) = 3'-dephospho-CoA + diphosphate. It participates in cofactor biosynthesis; coenzyme A biosynthesis; CoA from (R)-pantothenate: step 4/5. Reversibly transfers an adenylyl group from ATP to 4'-phosphopantetheine, yielding dephospho-CoA (dPCoA) and pyrophosphate. The chain is Phosphopantetheine adenylyltransferase from Streptococcus gordonii (strain Challis / ATCC 35105 / BCRC 15272 / CH1 / DL1 / V288).